A 597-amino-acid polypeptide reads, in one-letter code: Peptidyl-prolyl cis-trans isomerase-like 2 (597 aa).

Positions 41–114 (KKLPFNFCAA…TTDSDENKGD (74 aa)) constitute a U-box domain. In terms of domain architecture, PPIase cyclophilin-type spans 328–483 (NKGYVRMETN…NKIVIKDMII (156 aa)). Over residues 495–519 (KKQKEGEEERKREVARQGGTEDDRT) the composition is skewed to basic and acidic residues. Disordered stretches follow at residues 495 to 521 (KKQK…RTTW) and 560 to 597 (ATTT…FDGW).

Belongs to the cyclophilin-type PPIase family. PPIL2 subfamily.

The protein localises to the nucleus. The enzyme catalyses [protein]-peptidylproline (omega=180) = [protein]-peptidylproline (omega=0). It catalyses the reaction S-ubiquitinyl-[E2 ubiquitin-conjugating enzyme]-L-cysteine + [acceptor protein]-L-lysine = [E2 ubiquitin-conjugating enzyme]-L-cysteine + N(6)-ubiquitinyl-[acceptor protein]-L-lysine.. It functions in the pathway protein modification; protein ubiquitination. Functionally, may catalyze the cis-trans isomerization of proline imidic peptide bonds in oligopeptides thereby assisting the folding of proteins. May also function as a chaperone, playing a role in intracellular transport of proteins. May also have a protein ubiquitin ligase activity acting as an E3 ubiquitin protein ligase or as a ubiquitin-ubiquitin ligase promoting elongation of ubiquitin chains on proteins. This is Peptidyl-prolyl cis-trans isomerase-like 2 (ppi-2) from Neurospora crassa (strain ATCC 24698 / 74-OR23-1A / CBS 708.71 / DSM 1257 / FGSC 987).